Consider the following 384-residue polypeptide: S-adenosylmethionine synthase (384 aa).

His-15 lines the ATP pocket. Mg(2+) is bound at residue Asp-17. K(+) is bound at residue Glu-43. 2 residues coordinate L-methionine: Glu-56 and Gln-99. A flexible loop region spans residues 99–109; it reads QSPDINQGVDR. Residues 164–166, 230–231, Asp-239, 245–246, Ala-262, and Lys-266 each bind ATP; these read DAK, RF, and RK. Asp-239 serves as a coordination point for L-methionine. Lys-270 is an L-methionine binding site.

The protein belongs to the AdoMet synthase family. In terms of assembly, homotetramer; dimer of dimers. Requires Mg(2+) as cofactor. It depends on K(+) as a cofactor.

The protein resides in the cytoplasm. The enzyme catalyses L-methionine + ATP + H2O = S-adenosyl-L-methionine + phosphate + diphosphate. It functions in the pathway amino-acid biosynthesis; S-adenosyl-L-methionine biosynthesis; S-adenosyl-L-methionine from L-methionine: step 1/1. Catalyzes the formation of S-adenosylmethionine (AdoMet) from methionine and ATP. The overall synthetic reaction is composed of two sequential steps, AdoMet formation and the subsequent tripolyphosphate hydrolysis which occurs prior to release of AdoMet from the enzyme. This is S-adenosylmethionine synthase from Proteus mirabilis (strain HI4320).